We begin with the raw amino-acid sequence, 187 residues long: NADH-quinone oxidoreductase subunit B (187 aa).

[4Fe-4S] cluster is bound by residues cysteine 66, cysteine 67, cysteine 131, and cysteine 161.

This sequence belongs to the complex I 20 kDa subunit family. As to quaternary structure, NDH-1 is composed of 14 different subunits. Subunits NuoB, C, D, E, F, and G constitute the peripheral sector of the complex. It depends on [4Fe-4S] cluster as a cofactor.

The protein localises to the cell inner membrane. It carries out the reaction a quinone + NADH + 5 H(+)(in) = a quinol + NAD(+) + 4 H(+)(out). In terms of biological role, NDH-1 shuttles electrons from NADH, via FMN and iron-sulfur (Fe-S) centers, to quinones in the respiratory chain. Couples the redox reaction to proton translocation (for every two electrons transferred, four hydrogen ions are translocated across the cytoplasmic membrane), and thus conserves the redox energy in a proton gradient. The chain is NADH-quinone oxidoreductase subunit B from Rhizorhabdus wittichii (strain DSM 6014 / CCUG 31198 / JCM 15750 / NBRC 105917 / EY 4224 / RW1) (Sphingomonas wittichii).